A 169-amino-acid chain; its full sequence is Peptide deformylase (169 aa).

Fe cation contacts are provided by Cys94 and His136. The active site involves Glu137. His140 lines the Fe cation pocket.

This sequence belongs to the polypeptide deformylase family. Fe(2+) serves as cofactor.

It catalyses the reaction N-terminal N-formyl-L-methionyl-[peptide] + H2O = N-terminal L-methionyl-[peptide] + formate. In terms of biological role, removes the formyl group from the N-terminal Met of newly synthesized proteins. Requires at least a dipeptide for an efficient rate of reaction. N-terminal L-methionine is a prerequisite for activity but the enzyme has broad specificity at other positions. The sequence is that of Peptide deformylase from Phenylobacterium zucineum (strain HLK1).